The following is a 609-amino-acid chain: X-ray repair cross-complementing protein 6 (609 aa).

Residues 1–28 are disordered; it reads MSGWESYYKTEGDEEAEEEQEENLEASG. An N-acetylserine modification is found at Ser-2. Position 2 is a phosphoserine (Ser-2). Ser-6 carries the post-translational modification Phosphoserine; by PRKDC. Acidic residues predominate over residues 12-24; it reads GDEEAEEEQEENL. Position 27 is a phosphoserine (Ser-27). Lys-31 serves as the catalytic Schiff-base intermediate with DNA; for 5'-deoxyribose-5-phosphate lyase activity. The residue at position 31 (Lys-31) is an N6-acetyllysine. Ser-51 carries the phosphoserine; by PRKDC modification. The 208-residue stretch at 261-468 folds into the Ku domain; that stretch reads LKLNKDIVIS…VGKMKAIVEK (208 aa). Residues 277–341 form a DNA-binding region; sequence VQKALKPPPI…EETEELKRFD (65 aa). Residue Lys-287 forms a Glycyl lysine isopeptide (Lys-Gly) (interchain with G-Cter in SUMO2) linkage. Ser-306 carries the phosphoserine modification. N6-acetyllysine occurs at positions 317, 331, and 338. A Glycyl lysine isopeptide (Lys-Gly) (interchain with G-Cter in SUMO2) cross-link involves residue Lys-317. Residues 373–482 are interaction with XRCC5; it reads SLVIGSSTLF…YRSDSFENPV (110 aa). Residue Thr-455 is modified to Phosphothreonine. Residue Lys-461 is modified to N6-acetyllysine. A phosphoserine mark is found at Ser-477 and Ser-520. The segment at 536-562 is disordered; the sequence is PEGKVTKRKHDNEGSGSKRPKVEYSEE. An N6-acetyllysine mark is found at Lys-539, Lys-542, and Lys-544. Residue Ser-550 is modified to Phosphoserine. Residues 550 to 609 are interaction with DEAF1; that stretch reads SGSKRPKVEYSEEELKTHISKGTLGKFTVPMLKEACRAYGLKSGLKKQELLEALTKHFQD. N6-acetyllysine is present on residues Lys-553 and Lys-556. Lys-556 is covalently cross-linked (Glycyl lysine isopeptide (Lys-Gly) (interchain with G-Cter in SUMO2)). A Phosphoserine modification is found at Ser-560. Residue Lys-570 is modified to N6,N6,N6-trimethyllysine. The SAP domain maps to 573-607; it reads LGKFTVPMLKEACRAYGLKSGLKKQELLEALTKHF. Positions 578 to 583 are interaction with BAX; the sequence is VPMLKE.

It belongs to the ku70 family. As to quaternary structure, forms a heterodimer with XRCC5/Ku80; heterodimerization stabilizes XRCC5 protein. Component of the core long-range non-homologous end joining (NHEJ) complex (also named DNA-PK complex) composed of PRKDC, LIG4, XRCC4, XRCC6/Ku70, XRCC5/Ku86 and NHEJ1/XLF. Additional component of the NHEJ complex includes PAXX. Following autophosphorylation, PRKDC dissociates from DNA, leading to formation of the short-range NHEJ complex, composed of LIG4, XRCC4, XRCC6/Ku70, XRCC5/Ku86 and NHEJ1/XLF. The XRCC5-XRCC6 dimer also associates with NAA15, and this complex binds to the osteocalcin promoter and activates osteocalcin expression. In addition, XRCC6 interacts with the osteoblast-specific transcription factors MSX2, RUNX2 and DLX5. Interacts with ELF3. Interacts with ATP23. The XRCC5-XRRC6 dimer associates in a DNA-dependent manner with APEX1. Binds to CDK9 isoform 2. Identified in a complex with DEAF1 and XRCC5. Interacts with DEAF1 (via the SAND domain); the interaction is direct and may be inhibited by DNA-binding. Interacts with CLU. Interacts with NR4A3; the DNA-dependent protein kinase complex DNA-PK phosphorylates and activates NR4A3 and prevents NR4A3 ubiquitinylation and degradation. Interacts with CYREN isoform 1 (CYREN-1) and isoform 4 (CYREN-2) (via KBM motif). Interacts (via N-terminus) with HSF1 (via N-terminus); this interaction is direct and prevents XRCC5/XRCC6 heterodimeric binding and non-homologous end joining (NHEJ) repair activities induced by ionizing radiation (IR). Part of the HDP-RNP complex composed of at least HEXIM1, PRKDC, XRCC5, XRCC6, paraspeckle proteins (SFPQ, NONO, PSPC1, RBM14, and MATR3) and NEAT1 RNA. Interacts with HMBOX1. Interacts with ATF7. Interacts with APLF (via KBM motif). Interacts with WRN (via KBM motif). The XRCC5-XRCC6 dimer associates with ALKBH2. Interacts with TPRN; TPRN interacts with a number of DNA damage response proteins, is recruited to sites of DNA damage and may play a role in DNA damage repair. When not acetylated, interacts with BAX. Interacts with ERCC6L2. (Microbial infection) Interacts with human T-cell leukemia virus 1/HTLV-1 protein HBZ. Post-translationally, phosphorylation by PRKDC may enhance helicase activity. Phosphorylation of Ser-51 does not affect DNA repair. ADP-ribosylated by PARP3. In terms of processing, methylation by SETD4 leads to accumulation in the cytoplasm and is a prerequisite for acetylation, possibly due to the change of subcellular from the nucleus to the cytosol initiated by methylation, acetylation occurring in the cytosol. Post-translationally, acetylation can be catalyzed in vitro by CREBBP/CBP and KAT2B/PCAF.

The protein resides in the nucleus. The protein localises to the chromosome. Its subcellular location is the cytoplasm. Single-stranded DNA-dependent ATP-dependent helicase that plays a key role in DNA non-homologous end joining (NHEJ) by recruiting DNA-PK to DNA. Required for double-strand break repair and V(D)J recombination. Also has a role in chromosome translocation. Has a role in chromosome translocation. The DNA helicase II complex binds preferentially to fork-like ends of double-stranded DNA in a cell cycle-dependent manner. It works in the 3'-5' direction. During NHEJ, the XRCC5-XRRC6 dimer performs the recognition step: it recognizes and binds to the broken ends of the DNA and protects them from further resection. Binding to DNA may be mediated by XRCC6. The XRCC5-XRRC6 dimer acts as a regulatory subunit of the DNA-dependent protein kinase complex DNA-PK by increasing the affinity of the catalytic subunit PRKDC to DNA by 100-fold. The XRCC5-XRRC6 dimer is probably involved in stabilizing broken DNA ends and bringing them together. The assembly of the DNA-PK complex to DNA ends is required for the NHEJ ligation step. Probably also acts as a 5'-deoxyribose-5-phosphate lyase (5'-dRP lyase), by catalyzing the beta-elimination of the 5' deoxyribose-5-phosphate at an abasic site near double-strand breaks. 5'-dRP lyase activity allows to 'clean' the termini of abasic sites, a class of nucleotide damage commonly associated with strand breaks, before such broken ends can be joined. The XRCC5-XRRC6 dimer together with APEX1 acts as a negative regulator of transcription. In association with NAA15, the XRCC5-XRRC6 dimer binds to the osteocalcin promoter and activates osteocalcin expression. Plays a role in the regulation of DNA virus-mediated innate immune response by assembling into the HDP-RNP complex, a complex that serves as a platform for IRF3 phosphorylation and subsequent innate immune response activation through the cGAS-STING pathway. Negatively regulates apoptosis by interacting with BAX and sequestering it from the mitochondria. Might have deubiquitination activity, acting on BAX. This chain is X-ray repair cross-complementing protein 6 (XRCC6), found in Homo sapiens (Human).